Here is a 108-residue protein sequence, read N- to C-terminus: MLYSIFIFLLAGLCEIGGGYLIWLWLREGQSSWLGFIGGVILMMYGVIATFQSFPTFGRVYAAYGGVFIVMSLIWAYIVDKQAPDKYDLIGACICIIGVCVMILPSRT.

4 helical membrane passes run 5-25 (IFIFLLAGLCEIGGGYLIWLW), 31-51 (SSWLGFIGGVILMMYGVIATF), 60-80 (VYAAYGGVFIVMSLIWAYIVD), and 86-106 (KYDLIGACICIIGVCVMILPS).

The protein belongs to the UPF0060 family.

It is found in the cell membrane. The sequence is that of UPF0060 membrane protein SH0717 from Staphylococcus haemolyticus (strain JCSC1435).